A 217-amino-acid chain; its full sequence is ATP phosphoribosyltransferase (217 aa).

Belongs to the ATP phosphoribosyltransferase family. Short subfamily. Heteromultimer composed of HisG and HisZ subunits.

The protein localises to the cytoplasm. The enzyme catalyses 1-(5-phospho-beta-D-ribosyl)-ATP + diphosphate = 5-phospho-alpha-D-ribose 1-diphosphate + ATP. It participates in amino-acid biosynthesis; L-histidine biosynthesis; L-histidine from 5-phospho-alpha-D-ribose 1-diphosphate: step 1/9. In terms of biological role, catalyzes the condensation of ATP and 5-phosphoribose 1-diphosphate to form N'-(5'-phosphoribosyl)-ATP (PR-ATP). Has a crucial role in the pathway because the rate of histidine biosynthesis seems to be controlled primarily by regulation of HisG enzymatic activity. The chain is ATP phosphoribosyltransferase from Burkholderia orbicola (strain MC0-3).